A 1701-amino-acid polypeptide reads, in one-letter code: MTSKEIYPLRSTGTMMMISDQDLKLSTQLMLRIAELLLEFDANHEQSSFDPIPILKRISELLEQATDIFIKNDPDPLDDRHPHRTHPDSALGNILKIIFKNDDFMTKLVVSYILARDNVELNIQGSRLLLACIPGLDSKVVFSEPDDFIPRLYTWAGSEGTNETLQGYAMGLLAAALENTENASKYRNENALLVPFGLRRLHELQGRSLEEQKKIGQTDFSQLHAEQSTSNGTSIPSIKITSVDGSTKENEKTFVQSTDPPPPKKRRTEPCLTSLLRTEITQRVPSFHNLRNLDDSNSKWDILQPFLIGDQQVYPLSLATYQRFILQYLAACGEYQDLLLQTFEGNALEILFDYIDLEKSKDVRLTFDALKYLTSLLVHRKFALEFVNKGGIPALLKVPKTSLASVGVVTCLYYIAYSNDVMEILCQMSDEIVDETVQYVLWCLEHSHESGMASACMFFSQGLFYKAILRRFDQYDGPRKLHNYIATLTLMQNNEDVELTEEQIHTSTQCTRGVCTTFRSYLTAHIFIKVENYKKLYGNNLPTGMRFPELVQGDCPDYKSMKPYEEVCWQCEAIVTEMLRFTGSSFREAENLRKLGMVRMFLAVRVLSRDWENISPSLRTEMCVHALETLCMMFCLPSIQTELITQHSYNHSNYDGFTILLQTSLGRYDEDPSLRMAALGCIQRCVYVEPECWKAIIQRVKSSEEKSSSASKRQSKYEIIMNHLERMWTEVRKTDGIMALVNLINCKIPLTEADSIRKTATNTLTGLARHPEVRQILAKLPLIAHNGLQNLMREPVCSDKRDIHAAFCKEAVQLLQVIYGRKIHDQQGKEIQSSEKSHRQWVIENTQVSFNQAELLQLIHDHLLKSKLDSVAAMLKSEAKLPDRPASRSINTPILNKPLPSSGNNFSKINDTYPTLAPRTLESEIGGISARRPSNAASLSSPAMATRSHSTDDDVFATPTLPRRYTTSGAFPKKLMISPARQKLRPLTPGESSSGYRPIKDLNSIVTDYFRNQHSTCKNPVTTCPPFSLFYQHKCPELSYQTNVVRNISLRTLDQELLRPHERVYSQWTNERTIFSRFRNWKTIHDHDESYTKATFSVDDEHLIVGLFNGEVHWINVDTGLDEGHTNCHGSALTNIEPSKDGSMMLTSSAFSRPLSALWRLGEALQRVHTYREDSCVKFANTTMQRIVGTCRDKATVYDTETNHVLDTYLSGIDGLQYEKNYASFSPDDKLIFNDGLLWDVRKKNSAIHVFDRLSKITLFGTFHPHGTQIVINSEVYDIRTFRMLHHVPELNRCQVSFNSTGNIMYATEVTDVHCPDYDEKIFSSFRTFETRDYSALTTFEGRRPVIDLCASHQDQKMCVIEKVRPQMSDYMIQASTQLKIVEIGRLKDNEDENDEEEDEQREDHDEDEDSDESGDGDDDEEIGGNSSDRESVFRTLGRLGDESDSGSSVDDNDTLDDLDFENAQNRIIRRQAQRRRQRLNSSENDAELPGSDEGSDEDGDDDEDGEGDPDFDMGAAIDDLVDAVDEEVDEDELGTDGDDDDSGSWRTTNSIDSEDINLDDLDEEEARVVENEGNNERPARPVDPIEAAAAARRAILGRGLRDLRMGIRGGNRRRNGGGLEQAEMLNARAEEQRVSFMEALVRGAEAERREEEGGDDGESSSSSSSDTDEYQSEEEEINSVSTTALNPALRRRNRRPDDEA.

Residues 224-245 (HAEQSTSNGTSIPSIKITSVDG) are compositionally biased toward polar residues. 3 disordered regions span residues 224–269 (HAEQ…RRTE), 883–906 (DRPASRSINTPILNKPLPSSGNNF), and 932–961 (RPSNAASLSSPAMATRSHSTDDDVFATPTL). In terms of domain architecture, LisH spans 851-883 (NQAELLQLIHDHLLKSKLDSVAAMLKSEAKLPD). Residues 888–906 (RSINTPILNKPLPSSGNNF) show a composition bias toward polar residues. WD repeat units lie at residues 1086 to 1125 (DHDESYTKATFSVDDEHLIVGLFNGEVHWINVDTGLDEGH), 1128 to 1169 (CHGS…QRVH), 1171 to 1210 (YREDSCVKFANTTMQRIVGTCRDKATVYDTETNHVLDTYL), and 1215 to 1252 (GLQYEKNYASFSPDDKLIFNDGLLWDVRKKNSAIHVFD). 2 consecutive short sequence motifs (DWD box) follow at residues 1237–1245 (LLWDVRKKN) and 1275–1282 (EVYDIRTF). 3 disordered regions span residues 1384 to 1559 (IGRL…DINL), 1566 to 1585 (EARVVENEGNNERPARPVDP), and 1641 to 1701 (LVRG…DDEA). Composition is skewed to acidic residues over residues 1390 to 1423 (NEDENDEEEDEQREDHDEDEDSDESGDGDDDEEI) and 1451 to 1461 (DDNDTLDDLDF). Positions 1468–1479 (IIRRQAQRRRQR) are enriched in basic residues. 2 stretches are compositionally biased toward acidic residues: residues 1494–1512 (EGSDEDGDDDEDGEGDPDF) and 1520–1543 (DLVDAVDEEVDEDELGTDGDDDDS). Residues 1567–1581 (ARVVENEGNNERPAR) show a composition bias toward basic and acidic residues. Residues 1667–1678 (DTDEYQSEEEEI) show a composition bias toward acidic residues.

The protein belongs to the VPRBP/DCAF1 family. Component of the cul4-rbx1-ddb1-dcaf1 E3 ubiquitin-protein ligase complex.

The protein resides in the nucleus. It participates in protein modification; protein ubiquitination. Component of the cul4-rbx1-ddb1-dcaf1 E3 ubiquitin-protein ligase complex, dcaf1 may function as the substrate recognition module within this complex. The polypeptide is DDB1- and CUL4-associated factor homolog 1 (dcaf-1) (Caenorhabditis elegans).